The primary structure comprises 44 residues: Photosystem I reaction center subunit IX (44 aa).

The helical transmembrane segment at 7 to 27 threads the bilayer; sequence YLSVAPVLATLWFGSLAGLLI.

Belongs to the PsaJ family.

It localises to the plastid. The protein resides in the chloroplast thylakoid membrane. In terms of biological role, may help in the organization of the PsaE and PsaF subunits. In Illicium oligandrum (Star anise), this protein is Photosystem I reaction center subunit IX.